A 490-amino-acid chain; its full sequence is Phosphoglucosamine mutase (490 aa).

Residue Ser-139 is the Phosphoserine intermediate of the active site. The Mg(2+) site is built by Ser-139, Asp-279, Asp-281, and Asp-283. Ser-139 carries the phosphoserine modification.

Belongs to the phosphohexose mutase family. Mg(2+) serves as cofactor. In terms of processing, activated by phosphorylation.

It catalyses the reaction alpha-D-glucosamine 1-phosphate = D-glucosamine 6-phosphate. In terms of biological role, catalyzes the conversion of glucosamine-6-phosphate to glucosamine-1-phosphate. The protein is Phosphoglucosamine mutase of Nostoc punctiforme (strain ATCC 29133 / PCC 73102).